We begin with the raw amino-acid sequence, 1775 residues long: Atrochrysone carboxylic acid synthase (1775 aa).

In terms of domain architecture, Starter acyltransferase (SAT) spans 35-262 (LRRLQALSKD…YAKWASLPIF (228 aa)). Positions 400 to 833 (DSKIAIVGMS…GGNTTMLLEE (434 aa)) constitute a Ketosynthase family 3 (KS3) domain. Catalysis depends on for beta-ketoacyl synthase activity residues cysteine 573, histidine 708, and histidine 750. The 311-residue stretch at 934–1244 (FAFTGQGAFY…ENNWNTLADS (311 aa)) folds into the Malonyl-CoA:ACP transacylase (MAT) domain. The tract at residues 1313–1631 (TSSIHQVLQE…RSLLPTFFSP (319 aa)) is product template (PT) domain. The tract at residues 1317–1451 (HQVLQEDVTG…SAVVEYGDAN (135 aa)) is N-terminal hotdog fold. Positions 1317–1626 (HQVLQEDVTG…FRRFPRSLLP (310 aa)) constitute a PKS/mFAS DH domain. Histidine 1349 functions as the Proton acceptor; for dehydratase activity in the catalytic mechanism. Residues 1480–1626 (AAVLPRNMAY…FRRFPRSLLP (147 aa)) form a C-terminal hotdog fold region. Catalysis depends on aspartate 1537, which acts as the Proton donor; for dehydratase activity. A disordered region spans residues 1671 to 1697 (TAAPVPAPAPVPAKRAEPAPAAAQAAA). Positions 1688 to 1697 (PAPAAAQAAA) are enriched in low complexity. The region spanning 1697–1774 (ATQNPTITGA…ELKTYIEETF (78 aa)) is the Carrier domain. Serine 1734 is modified (O-(pantetheine 4'-phosphoryl)serine).

It carries out the reaction holo-[ACP] + 8 malonyl-CoA + 8 H(+) = atrochrysone carboxyl-[ACP] + 8 CO2 + 8 CoA + 2 H2O. It functions in the pathway secondary metabolite biosynthesis. Its function is as follows. Non-reducing polyketide synthase; part of the gene cluster that mediates the biosynthesis of physcion, a natural anthraquinone fungicide that can prevent plant fungal infections. The pathway begins with the polyketide synthase AcPKS that condenses 8 malonyl-CoA units to synthesize atrochrysone thioester which is released from the synthase by the atrochrysone carboxyl ACP thioesterase AcTE that breaks the thioester bond and leads to free atrochrysone carboxylic acid. Spontaneous decarboxylation of atrochrysone carboxylic acid leads to the formation of atrochrysone. Then, atrochrysone undergoes spontaneous dehydration and oxidation, giving the products emodin anthrone and emodin. The O-methyltransferase AcOMT then methylates the C-6 hydroxyl of emodin to form physcion. The chain is Atrochrysone carboxylic acid synthase from Aspergillus chevalieri (Eurotium chevalieri).